The following is a 71-amino-acid chain: Protein CYSTEINE-RICH TRANSMEMBRANE MODULE 4 (71 aa).

A compositionally biased stretch (polar residues) spans 1-12 (MSQYSQNQSSGA). A disordered region spans residues 1-31 (MSQYSQNQSSGAYPTPPVSTGPYMTPPPLGY). Pro residues predominate over residues 14 to 30 (PTPPVSTGPYMTPPPLG). A helical transmembrane segment spans residues 48-64 (SKGDGFLKGCLAAMCCC).

Belongs to the CYSTM1 family. In terms of assembly, heterodimers. Interacts with CYSTM6, CYSTM7, CYSTM12 and WIH1/CYSTM13. As to expression, mostly expressed in roots, stems, rosette leaves and siliques and, to a lower extent, in flowers and cauline leaves.

It is found in the cell membrane. It localises to the cytoplasm. In terms of biological role, involved in resistance to abiotic stress. The protein is Protein CYSTEINE-RICH TRANSMEMBRANE MODULE 4 of Arabidopsis thaliana (Mouse-ear cress).